We begin with the raw amino-acid sequence, 140 residues long: Sex-regulated protein janus-B (140 aa).

Arg-42 contacts substrate. The Proton acceptor role is filled by His-69. 110-112 is a substrate binding site; the sequence is SRT.

The protein belongs to the janus family.

Functionally, janA and janB regulate somatic sex differentiation. In Drosophila yakuba (Fruit fly), this protein is Sex-regulated protein janus-B (janB).